A 542-amino-acid chain; its full sequence is 2,3-bisphosphoglycerate-independent phosphoglycerate mutase (542 aa).

Positions 24 and 74 each coordinate Mn(2+). Ser-74 (phosphoserine intermediate) is an active-site residue. Residues His-135, 165–166, Arg-197, Arg-203, 268–271, and Lys-341 contribute to the substrate site; these read RD and RPDR. Mn(2+) contacts are provided by Asp-408, His-412, Asp-449, His-450, and His-467.

Belongs to the BPG-independent phosphoglycerate mutase family. As to quaternary structure, monomer. Mn(2+) is required as a cofactor.

The enzyme catalyses (2R)-2-phosphoglycerate = (2R)-3-phosphoglycerate. Its pathway is carbohydrate degradation; glycolysis; pyruvate from D-glyceraldehyde 3-phosphate: step 3/5. In terms of biological role, catalyzes the interconversion of 2-phosphoglycerate and 3-phosphoglycerate. This is 2,3-bisphosphoglycerate-independent phosphoglycerate mutase from Prochlorococcus marinus (strain NATL1A).